The chain runs to 449 residues: MKSIVAIVGRPNVGKSTLFNRIVGERRAIVDDMPGVTRDRNYAVVERYDKPFILVDTGGFEPVTEDRMLQQMREQSLLAMEEADVILFLMDAKQGLTPADNEVASMLRRVDKPVFYVVNKVDGEKVENEAAEFYALGIDNMHTISAAHNRGIRDLLDEIMALLPDEPLPGEDEVTNIAVVGRPNVGKSSLVNRLLGFERVVANPVAGTTRDSVDTFFTCNKKRYCLIDTAGIRRKGKTSQKLEKYSVVDALKSIERADVALIVLNAEDGITEQDKHIAGYVYEAGRACVFVVNKWDTLEKDNKTIGKFVEQIQYEFKFLAFAPIVFVSARTGQRIHKVMEEAAEVAEQYSRRVTTSELNRVFKEAVEAHHAPLHHARRVKFYFATQVGVKPPTFAIFTNQPDGVLTPYQRYLGNRFRDAFGFKGTPFRLLFRGRERKTADGRERKLSKQ.

EngA-type G domains lie at 3-167 and 175-350; these read SIVA…PDEP and TNIA…EQYS. Residues 9–16, 56–60, 119–122, 181–188, 228–232, and 293–296 each bind GTP; these read GRPNVGKS, DTGGF, NKVD, DTAGI, and NKWD. The 85-residue stretch at 351 to 435 folds into the KH-like domain; that stretch reads RRVTTSELNR…PFRLLFRGRE (85 aa).

It belongs to the TRAFAC class TrmE-Era-EngA-EngB-Septin-like GTPase superfamily. EngA (Der) GTPase family. Associates with the 50S ribosomal subunit.

Its function is as follows. GTPase that plays an essential role in the late steps of ribosome biogenesis. This Trichlorobacter lovleyi (strain ATCC BAA-1151 / DSM 17278 / SZ) (Geobacter lovleyi) protein is GTPase Der.